The following is a 136-amino-acid chain: Late embryogenesis abundant protein D-7 (136 aa).

Disordered regions lie at residues M1–A108 and G117–D136. Residues G11–K58 are compositionally biased toward basic and acidic residues. LEA 11-mer repeat repeat units lie at residues K31–E41, T42–E52, T53–G63, A64–Q74, and T75–E85.

This sequence belongs to the LEA type 4 family.

In terms of biological role, LEA proteins are late embryonic proteins abundant in higher plant seed embryos. There are two subsets of LEA proteins (5a and 5b), the first ones are expressed when the cotyledon weight reach 80 mg and the second set are expressed above 100 mg. The function of those proteins is not known. In Gossypium hirsutum (Upland cotton), this protein is Late embryogenesis abundant protein D-7.